The sequence spans 286 residues: Pantothenate synthetase (286 aa).

30–37 (MGNLHRGH) is a binding site for ATP. The active-site Proton donor is the histidine 37. Glutamine 61 lines the (R)-pantoate pocket. Glutamine 61 is a beta-alanine binding site. An ATP-binding site is contributed by 149 to 152 (GEKD). (R)-pantoate is bound at residue glutamine 155. Residues valine 178 and 186-189 (LSSR) each bind ATP.

Belongs to the pantothenate synthetase family. As to quaternary structure, homodimer.

It is found in the cytoplasm. It catalyses the reaction (R)-pantoate + beta-alanine + ATP = (R)-pantothenate + AMP + diphosphate + H(+). Its pathway is cofactor biosynthesis; (R)-pantothenate biosynthesis; (R)-pantothenate from (R)-pantoate and beta-alanine: step 1/1. Its function is as follows. Catalyzes the condensation of pantoate with beta-alanine in an ATP-dependent reaction via a pantoyl-adenylate intermediate. This Nitrosococcus oceani (strain ATCC 19707 / BCRC 17464 / JCM 30415 / NCIMB 11848 / C-107) protein is Pantothenate synthetase.